The primary structure comprises 103 residues: Co-chaperonin GroES (103 aa).

The protein belongs to the GroES chaperonin family. Heptamer of 7 subunits arranged in a ring. Interacts with the chaperonin GroEL.

It is found in the cytoplasm. Its function is as follows. Together with the chaperonin GroEL, plays an essential role in assisting protein folding. The GroEL-GroES system forms a nano-cage that allows encapsulation of the non-native substrate proteins and provides a physical environment optimized to promote and accelerate protein folding. GroES binds to the apical surface of the GroEL ring, thereby capping the opening of the GroEL channel. The protein is Co-chaperonin GroES of Gloeothece citriformis (strain PCC 7424) (Cyanothece sp. (strain PCC 7424)).